We begin with the raw amino-acid sequence, 132 residues long: ATP synthase epsilon chain, chloroplastic (132 aa).

Belongs to the ATPase epsilon chain family. As to quaternary structure, F-type ATPases have 2 components, CF(1) - the catalytic core - and CF(0) - the membrane proton channel. CF(1) has five subunits: alpha(3), beta(3), gamma(1), delta(1), epsilon(1). CF(0) has three main subunits: a, b and c.

The protein localises to the plastid. It localises to the chloroplast thylakoid membrane. In terms of biological role, produces ATP from ADP in the presence of a proton gradient across the membrane. This Calycanthus floridus var. glaucus (Eastern sweetshrub) protein is ATP synthase epsilon chain, chloroplastic.